A 135-amino-acid polypeptide reads, in one-letter code: UPF0299 membrane protein ECA2828 (135 aa).

Transmembrane regions (helical) follow at residues 5-25 (FIVCWQYLRAFALIYLCLLAG), 30-50 (ALLPFTIPGSIIGMLVLFTLL), 63-83 (GCYLLIRHMALLFVPIGVGVM), and 93-113 (FGPIVVSCLISTFIVMLVVGF).

The protein belongs to the UPF0299 family.

The protein resides in the cell inner membrane. In Pectobacterium atrosepticum (strain SCRI 1043 / ATCC BAA-672) (Erwinia carotovora subsp. atroseptica), this protein is UPF0299 membrane protein ECA2828.